Here is a 253-residue protein sequence, read N- to C-terminus: tRNA uridine(34) hydroxylase (253 aa).

The 95-residue stretch at 127–221 folds into the Rhodanese domain; it reads HGRPLVLLDT…YFEDVGGEGY (95 aa). The Cysteine persulfide intermediate role is filled by Cys-181.

The protein belongs to the TrhO family.

The enzyme catalyses uridine(34) in tRNA + AH2 + O2 = 5-hydroxyuridine(34) in tRNA + A + H2O. Its function is as follows. Catalyzes oxygen-dependent 5-hydroxyuridine (ho5U) modification at position 34 in tRNAs. The chain is tRNA uridine(34) hydroxylase from Xanthomonas campestris pv. campestris (strain B100).